We begin with the raw amino-acid sequence, 150 residues long: Calmodulin-like protein 7 (150 aa).

EF-hand domains are found at residues 1-36 (MDPTELKRVFQMFDKNGDGTITGKELSETLRSLGIY), 37-72 (IPDKELTQMIEKIDVNGDGCVDIDEFGELYKTIMDE), 75-110 (EEEEDMKEAFNVFDQNGDGFITVDELKAVLSSLGLK), and 113-148 (KTLDDCKKMIKKVDVDGDGRVNYKEFRQMMKGGGFN). Ca(2+) is bound by residues Asp14, Asn16, Asp18, Thr20, Glu25, Asp50, Asn52, Asp54, Cys56, Glu61, Asp88, Asn90, Asp92, Glu99, Asp126, Asp128, Asp130, Arg132, and Glu137.

Belongs to the calmodulin family.

Its function is as follows. Potential calcium sensor. This Arabidopsis thaliana (Mouse-ear cress) protein is Calmodulin-like protein 7 (CML7).